Reading from the N-terminus, the 180-residue chain is Adenine phosphoribosyltransferase (180 aa).

It belongs to the purine/pyrimidine phosphoribosyltransferase family. As to quaternary structure, homodimer.

Its subcellular location is the cytoplasm. The enzyme catalyses AMP + diphosphate = 5-phospho-alpha-D-ribose 1-diphosphate + adenine. Its pathway is purine metabolism; AMP biosynthesis via salvage pathway; AMP from adenine: step 1/1. In terms of biological role, catalyzes a salvage reaction resulting in the formation of AMP, that is energically less costly than de novo synthesis. The chain is Adenine phosphoribosyltransferase from Mycobacterium avium (strain 104).